The following is a 519-amino-acid chain: NADH-quinone oxidoreductase subunit N (519 aa).

13 helical membrane passes run 14 to 34 (LLPA…EVFL), 44 to 64 (AVLT…TMFE), 82 to 102 (FLTF…VSFL), 117 to 137 (LFAS…TLFV), 167 to 187 (FILG…LYGA), 209 to 229 (GLVY…VAAV), 249 to 269 (LMSV…FFMV), 278 to 298 (LLGL…LLAI), 307 to 327 (LAYS…ALFV), 359 to 379 (ILYY…IVSV), 407 to 427 (WAFA…TIGF), 431 to 451 (LLIF…VGVL), and 487 to 507 (LALV…GPIM).

This sequence belongs to the complex I subunit 2 family. NDH-1 is composed of 14 different subunits. Subunits NuoA, H, J, K, L, M, N constitute the membrane sector of the complex.

It localises to the cell inner membrane. It catalyses the reaction a quinone + NADH + 5 H(+)(in) = a quinol + NAD(+) + 4 H(+)(out). NDH-1 shuttles electrons from NADH, via FMN and iron-sulfur (Fe-S) centers, to quinones in the respiratory chain. The immediate electron acceptor for the enzyme in this species is believed to be ubiquinone. Couples the redox reaction to proton translocation (for every two electrons transferred, four hydrogen ions are translocated across the cytoplasmic membrane), and thus conserves the redox energy in a proton gradient. The protein is NADH-quinone oxidoreductase subunit N of Myxococcus xanthus (strain DK1622).